We begin with the raw amino-acid sequence, 231 residues long: Phosphoheptose isomerase (231 aa).

Positions 35–190 constitute an SIS domain; that stretch reads LAAVLGGGGR…CAAFDAALER (156 aa). 50 to 52 contacts substrate; sequence NGG. Zn(2+)-binding residues include histidine 59 and glutamate 63. Residues glutamate 63, 92–93, 118–120, serine 123, and glutamine 170 each bind substrate; these read ND and STS. Glutamine 170 and histidine 178 together coordinate Zn(2+). Composition is skewed to low complexity over residues 197 to 206 and 214 to 225; these read AAGSAASTGR and ASTGRAAGAGRA. The segment at 197-231 is disordered; the sequence is AAGSAASTGRAARRERAASTGRAAGAGRAAQRKRR.

This sequence belongs to the SIS family. GmhA subfamily. Zn(2+) serves as cofactor.

Its subcellular location is the cytoplasm. It catalyses the reaction 2 D-sedoheptulose 7-phosphate = D-glycero-alpha-D-manno-heptose 7-phosphate + D-glycero-beta-D-manno-heptose 7-phosphate. It participates in carbohydrate biosynthesis; D-glycero-D-manno-heptose 7-phosphate biosynthesis; D-glycero-alpha-D-manno-heptose 7-phosphate and D-glycero-beta-D-manno-heptose 7-phosphate from sedoheptulose 7-phosphate: step 1/1. Functionally, catalyzes the isomerization of sedoheptulose 7-phosphate in D-glycero-D-manno-heptose 7-phosphate. The chain is Phosphoheptose isomerase from Streptomyces coelicolor (strain ATCC BAA-471 / A3(2) / M145).